Consider the following 386-residue polypeptide: Zinc finger protein 385A (386 aa).

Residues 74–98 (ISCNICQIRFNSQSQAEAHYKGNRH) form a Matrin-type 1 zinc finger. The disordered stretch occupies residues 90-193 (EAHYKGNRHA…ASLPGGSKEE (104 aa)). Basic and acidic residues predominate over residues 103-121 (KGIEAAKTRGREPGVREPG). A necessary for binding to ITPR1, CEBPA and p53/TP53 mRNAs region spans residues 145–351 (NGLGPAPGSP…AGSPLSLRPA (207 aa)). Residue S185 is modified to Phosphoserine. Residues 201 to 225 (LYCALCKVAVNSLSQLEAHNKGTKH) form a Matrin-type 2 zinc finger. Position 248 is a phosphothreonine (T248). The Matrin-type 3 zinc-finger motif lies at 261–285 (FHCEICNVKVNSEVQLKQHISSRRH). Positions 279–309 (HISSRRHRDGVAGKPNPLLSRHKKSRGAGEL) are disordered.

Interacts with ELAVL1; the interaction is indirect, mRNA-dependent and may regulate p53/TP53 expression. Interacts with p53/TP53; the interaction is direct and enhances p53/TP53 transactivation functions on cell-cycle arrest target genes, resulting in growth arrest. Ubiquitinated upon prolonged exposure to genotoxic stress, which leads to proteasomal degradation of ZNF385A and releases p53/TP53 from cell-cycle arrest target gene promoters. In terms of tissue distribution, expressed predominantly in the retina.

It is found in the cytoplasm. Its subcellular location is the nucleus. It localises to the nucleolus. The protein localises to the cell projection. The protein resides in the dendrite. Functionally, RNA-binding protein that affects the localization and the translation of a subset of mRNA. May play a role in adipogenesis through binding to the 3'-UTR of CEBPA mRNA and regulation of its translation. Targets ITPR1 mRNA to dendrites in Purkinje cells, and may regulate its activity-dependent translation. With ELAVL1, binds the 3'-UTR of p53/TP53 mRNAs to control their nuclear export induced by CDKN2A. Hence, may regulate p53/TP53 expression and mediate in part the CDKN2A anti-proliferative activity. May also bind CCNB1 mRNA. Alternatively, may also regulate p53/TP53 activity through direct protein-protein interaction. Interacts with p53/TP53 and promotes cell-cycle arrest over apoptosis enhancing preferentially the DNA binding and transactivation of p53/TP53 on cell-cycle arrest target genes over proapoptotic target genes. May also regulate the ubiquitination and stability of CDKN1A promoting DNA damage-induced cell cycle arrest. Also plays a role in megakaryocytes differentiation. The polypeptide is Zinc finger protein 385A (ZNF385A) (Homo sapiens (Human)).